Consider the following 189-residue polypeptide: Large ribosomal subunit protein eL20 (189 aa).

It belongs to the eukaryotic ribosomal protein eL20 family.

It is found in the cytoplasm. The protein is Large ribosomal subunit protein eL20 (RPL18A) of Tetrahymena thermophila.